Here is a 220-residue protein sequence, read N- to C-terminus: MNYAKYIDHTLLKPESTRNQIDKIIEEAKAFNFKSICINPTHVKYAAEQLKGSDVLVCTVIGFPLGASTTETKIFETKDAINKGASEVDMVINIGALKDGRFEDVQKDIEGVVGAANGKTVKVIIETCLLTDEEKVKASELSKVAGADFVKTSTGFAGGGATPEDVKLMKDTVGDDLEVKASGGVRNLEDFNHMLEAGATRIGASAGVEIVQGLESDSDY.

Catalysis depends on Asp-89, which acts as the Proton donor/acceptor. Lys-151 serves as the catalytic Schiff-base intermediate with acetaldehyde. Lys-180 functions as the Proton donor/acceptor in the catalytic mechanism.

Belongs to the DeoC/FbaB aldolase family. DeoC type 1 subfamily.

The protein localises to the cytoplasm. The catalysed reaction is 2-deoxy-D-ribose 5-phosphate = D-glyceraldehyde 3-phosphate + acetaldehyde. It participates in carbohydrate degradation; 2-deoxy-D-ribose 1-phosphate degradation; D-glyceraldehyde 3-phosphate and acetaldehyde from 2-deoxy-alpha-D-ribose 1-phosphate: step 2/2. Catalyzes a reversible aldol reaction between acetaldehyde and D-glyceraldehyde 3-phosphate to generate 2-deoxy-D-ribose 5-phosphate. This Staphylococcus saprophyticus subsp. saprophyticus (strain ATCC 15305 / DSM 20229 / NCIMB 8711 / NCTC 7292 / S-41) protein is Deoxyribose-phosphate aldolase.